The primary structure comprises 412 residues: 4-hydroxy-3-methylbut-2-en-1-yl diphosphate synthase (ferredoxin) (412 aa).

Polar residues predominate over residues methionine 1–glutamine 12. The interval methionine 1–arginine 22 is disordered. The [4Fe-4S] cluster site is built by cysteine 314, cysteine 317, cysteine 348, and glutamate 355.

This sequence belongs to the IspG family. [4Fe-4S] cluster serves as cofactor.

It catalyses the reaction (2E)-4-hydroxy-3-methylbut-2-enyl diphosphate + 2 oxidized [2Fe-2S]-[ferredoxin] + H2O = 2-C-methyl-D-erythritol 2,4-cyclic diphosphate + 2 reduced [2Fe-2S]-[ferredoxin] + H(+). The protein operates within isoprenoid biosynthesis; isopentenyl diphosphate biosynthesis via DXP pathway; isopentenyl diphosphate from 1-deoxy-D-xylulose 5-phosphate: step 5/6. Its function is as follows. Converts 2C-methyl-D-erythritol 2,4-cyclodiphosphate (ME-2,4cPP) into 1-hydroxy-2-methyl-2-(E)-butenyl 4-diphosphate. In Synechococcus sp. (strain JA-3-3Ab) (Cyanobacteria bacterium Yellowstone A-Prime), this protein is 4-hydroxy-3-methylbut-2-en-1-yl diphosphate synthase (ferredoxin).